Reading from the N-terminus, the 154-residue chain is 6,7-dimethyl-8-ribityllumazine synthase (154 aa).

5-amino-6-(D-ribitylamino)uracil contacts are provided by residues phenylalanine 22, 56–58 (AFE), and 80–82 (TVI). 85–86 (AT) contacts (2S)-2-hydroxy-3-oxobutyl phosphate. Catalysis depends on histidine 88, which acts as the Proton donor. 5-amino-6-(D-ribitylamino)uracil is bound at residue phenylalanine 113. Arginine 127 contacts (2S)-2-hydroxy-3-oxobutyl phosphate.

Belongs to the DMRL synthase family. As to quaternary structure, forms an icosahedral capsid composed of 60 subunits, arranged as a dodecamer of pentamers.

The catalysed reaction is (2S)-2-hydroxy-3-oxobutyl phosphate + 5-amino-6-(D-ribitylamino)uracil = 6,7-dimethyl-8-(1-D-ribityl)lumazine + phosphate + 2 H2O + H(+). It functions in the pathway cofactor biosynthesis; riboflavin biosynthesis; riboflavin from 2-hydroxy-3-oxobutyl phosphate and 5-amino-6-(D-ribitylamino)uracil: step 1/2. Catalyzes the formation of 6,7-dimethyl-8-ribityllumazine by condensation of 5-amino-6-(D-ribitylamino)uracil with 3,4-dihydroxy-2-butanone 4-phosphate. This is the penultimate step in the biosynthesis of riboflavin. The protein is 6,7-dimethyl-8-ribityllumazine synthase of Bacillus licheniformis (strain ATCC 14580 / DSM 13 / JCM 2505 / CCUG 7422 / NBRC 12200 / NCIMB 9375 / NCTC 10341 / NRRL NRS-1264 / Gibson 46).